The chain runs to 453 residues: Bifunctional protein GlmU (453 aa).

The pyrophosphorylase stretch occupies residues 1–231 (MERTCLAVIL…EIEMTGCNNR (231 aa)). Residues 10–13 (LAAG), Lys-24, Gln-77, 82–83 (GT), 105–107 (YGD), Gly-143, Glu-157, Asn-172, and Asn-229 contribute to the UDP-N-acetyl-alpha-D-glucosamine site. Mg(2+) is bound at residue Asp-107. Position 229 (Asn-229) interacts with Mg(2+). The interval 232–252 (AELAVIERFWQERRRREMMLA) is linker. The interval 253 to 453 (GVTMIAPETV…AIKAAKKAEA (201 aa)) is N-acetyltransferase. Residues Arg-318 and Lys-336 each coordinate UDP-N-acetyl-alpha-D-glucosamine. Catalysis depends on His-348, which acts as the Proton acceptor. Tyr-351 and Asn-362 together coordinate UDP-N-acetyl-alpha-D-glucosamine. Residues Ala-365, 371–372 (NY), Ser-390, Ser-408, and Arg-425 contribute to the acetyl-CoA site.

It in the N-terminal section; belongs to the N-acetylglucosamine-1-phosphate uridyltransferase family. This sequence in the C-terminal section; belongs to the transferase hexapeptide repeat family. Homotrimer. Mg(2+) is required as a cofactor.

It is found in the cytoplasm. It catalyses the reaction alpha-D-glucosamine 1-phosphate + acetyl-CoA = N-acetyl-alpha-D-glucosamine 1-phosphate + CoA + H(+). The catalysed reaction is N-acetyl-alpha-D-glucosamine 1-phosphate + UTP + H(+) = UDP-N-acetyl-alpha-D-glucosamine + diphosphate. It functions in the pathway nucleotide-sugar biosynthesis; UDP-N-acetyl-alpha-D-glucosamine biosynthesis; N-acetyl-alpha-D-glucosamine 1-phosphate from alpha-D-glucosamine 6-phosphate (route II): step 2/2. Its pathway is nucleotide-sugar biosynthesis; UDP-N-acetyl-alpha-D-glucosamine biosynthesis; UDP-N-acetyl-alpha-D-glucosamine from N-acetyl-alpha-D-glucosamine 1-phosphate: step 1/1. It participates in bacterial outer membrane biogenesis; LPS lipid A biosynthesis. In terms of biological role, catalyzes the last two sequential reactions in the de novo biosynthetic pathway for UDP-N-acetylglucosamine (UDP-GlcNAc). The C-terminal domain catalyzes the transfer of acetyl group from acetyl coenzyme A to glucosamine-1-phosphate (GlcN-1-P) to produce N-acetylglucosamine-1-phosphate (GlcNAc-1-P), which is converted into UDP-GlcNAc by the transfer of uridine 5-monophosphate (from uridine 5-triphosphate), a reaction catalyzed by the N-terminal domain. The chain is Bifunctional protein GlmU from Rhizobium etli (strain ATCC 51251 / DSM 11541 / JCM 21823 / NBRC 15573 / CFN 42).